The primary structure comprises 145 residues: Globin (145 aa).

S2 is subject to N-acetylserine. One can recognise a Globin domain in the interval 2 to 145 (SLSAAEADLV…IVAALKAAGK (144 aa)). A heme b-binding site is contributed by H96.

Belongs to the globin family. In terms of assembly, monomer.

This Aplysia kurodai (Kuroda's sea hare) protein is Globin.